Reading from the N-terminus, the 463-residue chain is Asparagine--tRNA ligase (463 aa).

This sequence belongs to the class-II aminoacyl-tRNA synthetase family. In terms of assembly, homodimer.

It localises to the cytoplasm. It carries out the reaction tRNA(Asn) + L-asparagine + ATP = L-asparaginyl-tRNA(Asn) + AMP + diphosphate + H(+). The polypeptide is Asparagine--tRNA ligase (Nostoc sp. (strain PCC 7120 / SAG 25.82 / UTEX 2576)).